The chain runs to 485 residues: MTQWIAGEWVEGLGEEFTSLSPYDNQVVWRGKGATAEQVEMAVKAARQAFVGWKKLSVAEREAMVLAFAEQVKENSEEIAQVIAKETGKPLWETRTEAAAMAGKIAISIRAYHERTGESQKEAAGNQIVLRHRPLGVMAVFGPYNFPGHLPNGHIVPALLAGNTVVFKPSEQTPWTGELAMKLWQAAGLPQGVINLVQGGKETGIALAESKGIDGLLFTGSANTGHLLHRQFAGQPGKMLALEMGGNNPMVITDHYGDLDATVYTIIQSAFISAGQRCTCARRLYIPLGEKGDALITRLVEATKKLRVDQPFAEPAPFMGPQISEAAANFILAAQANLQSLGGESLIEAKAGEAAFVTPGIIDVTNIAELPDEEYFGPLLQVVRYQTLEQAVELANDTRFGLSAGLVSTDDGEWQYFVDHIRAGIVNRNRQLTGASGDAPFGGPGASGNLRPSAYYAADYCAYPMASMEGEETLLPATLSPGVEL.

Position 220-225 (220-225 (GSANTG)) interacts with NAD(+). Catalysis depends on residues E243 and C278.

The protein belongs to the aldehyde dehydrogenase family. AstD subfamily.

The enzyme catalyses N-succinyl-L-glutamate 5-semialdehyde + NAD(+) + H2O = N-succinyl-L-glutamate + NADH + 2 H(+). The protein operates within amino-acid degradation; L-arginine degradation via AST pathway; L-glutamate and succinate from L-arginine: step 4/5. Functionally, catalyzes the NAD-dependent reduction of succinylglutamate semialdehyde into succinylglutamate. This chain is N-succinylglutamate 5-semialdehyde dehydrogenase, found in Vibrio vulnificus (strain YJ016).